A 371-amino-acid chain; its full sequence is Queuine tRNA-ribosyltransferase (371 aa).

The active-site Proton acceptor is the Asp-90. Substrate is bound by residues 90 to 94 (DSGGF), Asp-144, Gln-188, and Gly-215. The tract at residues 246 to 252 (GVGTPED) is RNA binding. Residue Asp-265 is the Nucleophile of the active site. Residues 270-274 (TRNAR) form an RNA binding; important for wobble base 34 recognition region. Cys-303, Cys-305, Cys-308, and His-334 together coordinate Zn(2+).

It belongs to the queuine tRNA-ribosyltransferase family. As to quaternary structure, homodimer. Within each dimer, one monomer is responsible for RNA recognition and catalysis, while the other monomer binds to the replacement base PreQ1. It depends on Zn(2+) as a cofactor.

It carries out the reaction 7-aminomethyl-7-carbaguanine + guanosine(34) in tRNA = 7-aminomethyl-7-carbaguanosine(34) in tRNA + guanine. The protein operates within tRNA modification; tRNA-queuosine biosynthesis. In terms of biological role, catalyzes the base-exchange of a guanine (G) residue with the queuine precursor 7-aminomethyl-7-deazaguanine (PreQ1) at position 34 (anticodon wobble position) in tRNAs with GU(N) anticodons (tRNA-Asp, -Asn, -His and -Tyr). Catalysis occurs through a double-displacement mechanism. The nucleophile active site attacks the C1' of nucleotide 34 to detach the guanine base from the RNA, forming a covalent enzyme-RNA intermediate. The proton acceptor active site deprotonates the incoming PreQ1, allowing a nucleophilic attack on the C1' of the ribose to form the product. After dissociation, two additional enzymatic reactions on the tRNA convert PreQ1 to queuine (Q), resulting in the hypermodified nucleoside queuosine (7-(((4,5-cis-dihydroxy-2-cyclopenten-1-yl)amino)methyl)-7-deazaguanosine). The polypeptide is Queuine tRNA-ribosyltransferase (Neisseria meningitidis serogroup B (strain ATCC BAA-335 / MC58)).